A 303-amino-acid polypeptide reads, in one-letter code: 2-dehydropantoate 2-reductase (303 aa).

NADP(+) is bound by residues 7–12, Asn-98, and Ala-122; that span reads GCGALG. Residue Asn-98 participates in substrate binding. The active-site Proton donor is the Lys-176. Substrate-binding residues include Asn-180, Asn-184, Asn-194, and Ser-244. Residue Glu-256 participates in NADP(+) binding.

This sequence belongs to the ketopantoate reductase family. As to quaternary structure, monomer.

Its subcellular location is the cytoplasm. The enzyme catalyses (R)-pantoate + NADP(+) = 2-dehydropantoate + NADPH + H(+). It functions in the pathway cofactor biosynthesis; (R)-pantothenate biosynthesis; (R)-pantoate from 3-methyl-2-oxobutanoate: step 2/2. In terms of biological role, catalyzes the NADPH-dependent reduction of ketopantoate into pantoic acid. Has a strong preference for NADPH over NADH as the electron acceptor. Pantoate, ketoisovalerate, oxaloacetate, pyruvate, 3-hydroxypyruvate, alpha-ketoglutarate, alpha-ketobutyrate, and acetaldehyde cannot serve as substrates for reduction. The polypeptide is 2-dehydropantoate 2-reductase (Salmonella typhimurium (strain LT2 / SGSC1412 / ATCC 700720)).